The sequence spans 555 residues: Urocanate hydratase (555 aa).

NAD(+)-binding positions include 52–53, Gln-130, 176–178, Glu-196, Arg-201, 242–243, 263–267, 272–273, and Tyr-321; these read GG, GMG, NA, QTSAH, and YL. Cys-409 is an active-site residue. Gly-491 serves as a coordination point for NAD(+).

It belongs to the urocanase family. NAD(+) is required as a cofactor.

It localises to the cytoplasm. The enzyme catalyses 4-imidazolone-5-propanoate = trans-urocanate + H2O. The protein operates within amino-acid degradation; L-histidine degradation into L-glutamate; N-formimidoyl-L-glutamate from L-histidine: step 2/3. Catalyzes the conversion of urocanate to 4-imidazolone-5-propionate. In Nocardioides sp. (strain ATCC BAA-499 / JS614), this protein is Urocanate hydratase.